A 76-amino-acid chain; its full sequence is Large ribosomal subunit protein uL29 (76 aa).

The protein belongs to the universal ribosomal protein uL29 family.

The chain is Large ribosomal subunit protein uL29 from Corynebacterium glutamicum (strain R).